We begin with the raw amino-acid sequence, 433 residues long: Monodehydroascorbate reductase (433 aa).

Residues 13-16 (GGVS), Glu-40, Arg-47, Lys-52, Ile-95, and 146-147 (RE) contribute to the FAD site. Residues 171–177 (GGYIGLE), Glu-195, Arg-201, and Gly-260 contribute to the NAD(+) site. 173–177 (YIGLE) is a binding site for NADP(+). The NADP(+) site is built by Arg-201 and Gly-260. Asp-297 contributes to the FAD binding site. 313–314 (EH) contributes to the NAD(+) binding site. 313-314 (EH) is a binding site for NADP(+). FAD is bound at residue Val-315. Residue Arg-319 coordinates L-ascorbate. Tyr-348 serves as a coordination point for FAD. Tyr-348 provides a ligand contact to NAD(+). An NADP(+)-binding site is contributed by Tyr-348. An L-ascorbate-binding site is contributed by Arg-350.

This sequence belongs to the FAD-dependent oxidoreductase family. FAD serves as cofactor. In terms of tissue distribution, expressed in leaves, and to a lesser degree in stems, roots and all stages of fruit.

It is found in the cytoplasm. It catalyses the reaction 2 monodehydro-L-ascorbate radical + NADH + H(+) = 2 L-ascorbate + NAD(+). Catalyzes the conversion of monodehydroascorbate to ascorbate, oxidizing NADH in the process. In Solanum lycopersicum (Tomato), this protein is Monodehydroascorbate reductase.